Here is a 549-residue protein sequence, read N- to C-terminus: Glucose-6-phosphate isomerase (549 aa).

The Proton donor role is filled by glutamate 353. Residues histidine 384 and lysine 513 contribute to the active site.

It belongs to the GPI family.

It is found in the cytoplasm. It carries out the reaction alpha-D-glucose 6-phosphate = beta-D-fructose 6-phosphate. It functions in the pathway carbohydrate biosynthesis; gluconeogenesis. Its pathway is carbohydrate degradation; glycolysis; D-glyceraldehyde 3-phosphate and glycerone phosphate from D-glucose: step 2/4. Catalyzes the reversible isomerization of glucose-6-phosphate to fructose-6-phosphate. The protein is Glucose-6-phosphate isomerase of Brucella canis (strain ATCC 23365 / NCTC 10854 / RM-666).